Here is a 61-residue protein sequence, read N- to C-terminus: Tubulin alpha-4 chain (61 aa).

Residue glutamine 11 participates in GTP binding. The interval 35–61 (QMPGDKTIGGGDAEFDEGEDGDEGDEY) is disordered. Lysine 40 carries the post-translational modification N6-acetyllysine. The span at 47 to 61 (AEFDEGEDGDEGDEY) shows a compositional bias: acidic residues.

Belongs to the tubulin family. In terms of assembly, dimer of alpha and beta chains. A typical microtubule is a hollow water-filled tube with an outer diameter of 25 nm and an inner diameter of 15 nM. Alpha-beta heterodimers associate head-to-tail to form protofilaments running lengthwise along the microtubule wall with the beta-tubulin subunit facing the microtubule plus end conferring a structural polarity. Microtubules usually have 13 protofilaments but different protofilament numbers can be found in some organisms and specialized cells. Requires Mg(2+) as cofactor. In terms of processing, undergoes a tyrosination/detyrosination cycle, the cyclic removal and re-addition of a C-terminal tyrosine residue by the enzymes tubulin tyrosine carboxypeptidase (TTCP) and tubulin tyrosine ligase (TTL), respectively. Post-translationally, acetylation of alpha chains at Lys-40 stabilizes microtubules and affects affinity and processivity of microtubule motors. This modification has a role in multiple cellular functions, ranging from cell motility, cell cycle progression or cell differentiation to intracellular trafficking and signaling.

It localises to the cytoplasm. Its subcellular location is the cytoskeleton. The enzyme catalyses GTP + H2O = GDP + phosphate + H(+). Functionally, tubulin is the major constituent of microtubules, a cylinder consisting of laterally associated linear protofilaments composed of alpha- and beta-tubulin heterodimers. Microtubules grow by the addition of GTP-tubulin dimers to the microtubule end, where a stabilizing cap forms. Below the cap, tubulin dimers are in GDP-bound state, owing to GTPase activity of alpha-tubulin. The chain is Tubulin alpha-4 chain (TUBA4) from Zea mays (Maize).